We begin with the raw amino-acid sequence, 211 residues long: Thiamine-phosphate synthase (211 aa).

Residues 37-41 and Asn-69 contribute to the 4-amino-2-methyl-5-(diphosphooxymethyl)pyrimidine site; that span reads QLRIK. Mg(2+)-binding residues include Asp-70 and Asp-89. Position 108 (Ser-108) interacts with 4-amino-2-methyl-5-(diphosphooxymethyl)pyrimidine. Residue 134–136 participates in 2-[(2R,5Z)-2-carboxy-4-methylthiazol-5(2H)-ylidene]ethyl phosphate binding; it reads TQT. Residue Lys-137 participates in 4-amino-2-methyl-5-(diphosphooxymethyl)pyrimidine binding. 2-[(2R,5Z)-2-carboxy-4-methylthiazol-5(2H)-ylidene]ethyl phosphate contacts are provided by residues Gly-166 and 186 to 187; that span reads VS.

The protein belongs to the thiamine-phosphate synthase family. The cofactor is Mg(2+).

It catalyses the reaction 2-[(2R,5Z)-2-carboxy-4-methylthiazol-5(2H)-ylidene]ethyl phosphate + 4-amino-2-methyl-5-(diphosphooxymethyl)pyrimidine + 2 H(+) = thiamine phosphate + CO2 + diphosphate. The catalysed reaction is 2-(2-carboxy-4-methylthiazol-5-yl)ethyl phosphate + 4-amino-2-methyl-5-(diphosphooxymethyl)pyrimidine + 2 H(+) = thiamine phosphate + CO2 + diphosphate. The enzyme catalyses 4-methyl-5-(2-phosphooxyethyl)-thiazole + 4-amino-2-methyl-5-(diphosphooxymethyl)pyrimidine + H(+) = thiamine phosphate + diphosphate. The protein operates within cofactor biosynthesis; thiamine diphosphate biosynthesis; thiamine phosphate from 4-amino-2-methyl-5-diphosphomethylpyrimidine and 4-methyl-5-(2-phosphoethyl)-thiazole: step 1/1. Its function is as follows. Condenses 4-methyl-5-(beta-hydroxyethyl)thiazole monophosphate (THZ-P) and 2-methyl-4-amino-5-hydroxymethyl pyrimidine pyrophosphate (HMP-PP) to form thiamine monophosphate (TMP). This is Thiamine-phosphate synthase from Escherichia coli O6:H1 (strain CFT073 / ATCC 700928 / UPEC).